The chain runs to 230 residues: Oxygen-evolving enhancer protein 3-2, chloroplastic (230 aa).

Residues 1-49 constitute a chloroplast transit peptide; it reads MAQAVTSMAGLRGASQAVLEGSLQINGSNRLNISRVSVGSQRTGLVIRA. A thylakoid-targeting transit peptide spans 50-82; sequence QQNVSVPESSRRSVIGLVAAGLAGGSFVKAVFA. The residue at position 125 (Ser-125) is a Phosphoserine. A Phosphothreonine modification is found at Thr-195. A Phosphotyrosine modification is found at Tyr-215. At Ser-216 the chain carries Phosphoserine. Phosphothreonine is present on Thr-218.

The protein belongs to the PsbQ family.

It localises to the plastid. The protein localises to the chloroplast thylakoid membrane. In terms of biological role, required for photosystem II assembly/stability and photoautotrophic growth under low light conditions. The protein is Oxygen-evolving enhancer protein 3-2, chloroplastic (PSBQ2) of Arabidopsis thaliana (Mouse-ear cress).